Here is a 331-residue protein sequence, read N- to C-terminus: Major outer membrane protein P.IB (331 aa).

Positions 1–19 (MKKSLIALTLAALPVAAMA) are cleaved as a signal peptide.

Belongs to the Gram-negative porin family. As to quaternary structure, homotrimer.

The protein localises to the cell outer membrane. Functionally, serves as a slightly cation selective porin. This Neisseria meningitidis serogroup B protein is Major outer membrane protein P.IB (porB).